The primary structure comprises 145 residues: 3-dehydroquinate dehydratase (145 aa).

The Proton acceptor role is filled by Tyr24. Residues Asn76, His82, and Asp89 each contribute to the substrate site. The active-site Proton donor is His102. Substrate is bound by residues Leu103 to Ser104 and Arg113.

Belongs to the type-II 3-dehydroquinase family. In terms of assembly, homododecamer.

It carries out the reaction 3-dehydroquinate = 3-dehydroshikimate + H2O. Its pathway is metabolic intermediate biosynthesis; chorismate biosynthesis; chorismate from D-erythrose 4-phosphate and phosphoenolpyruvate: step 3/7. Catalyzes a trans-dehydration via an enolate intermediate. The protein is 3-dehydroquinate dehydratase of Nitrosomonas eutropha (strain DSM 101675 / C91 / Nm57).